The primary structure comprises 242 residues: Lactate utilization protein A 2 (242 aa).

This sequence belongs to the LutA/YkgE family.

Its function is as follows. Is involved in L-lactate degradation and allows cells to grow with lactate as the sole carbon source. The protein is Lactate utilization protein A 2 of Bacillus cereus (strain AH820).